The chain runs to 343 residues: Vacuolar membrane protein Kpol_1003p17 (343 aa).

The tract at residues 45–65 is disordered; it reads TTDTSGTSTSSRDVSSGQSTL. The chain crosses the membrane as a helical span at residues 101–121; that stretch reads FIAVGSIIGGIFGGVLIWWMI. The interval 235–343 is disordered; sequence EVLQQQRQRR…YLDDMLENDN (109 aa). A compositionally biased stretch (polar residues) spans 254 to 264; that stretch reads ELPSTPPSNFK. The span at 269 to 280 shows a compositional bias: basic and acidic residues; sequence KPERSASPERKS. Positions 281–290 are enriched in basic residues; the sequence is RSPIRQHRKN.

Belongs to the PRM5 family.

Its subcellular location is the vacuole membrane. The chain is Vacuolar membrane protein Kpol_1003p17 from Vanderwaltozyma polyspora (strain ATCC 22028 / DSM 70294 / BCRC 21397 / CBS 2163 / NBRC 10782 / NRRL Y-8283 / UCD 57-17) (Kluyveromyces polysporus).